We begin with the raw amino-acid sequence, 189 residues long: uncharacterized protein (189 aa).

The next 3 membrane-spanning stretches (helical) occupy residues 2–22 (LVVVSLTPPVGVCVGLFHHLL), 93–113 (ILFYFYFVLILFYFIALYFIL), and 116–136 (FYSTILFFFPLFIKCSHLHTL).

Its subcellular location is the membrane. This is an uncharacterized protein from Schizosaccharomyces pombe (strain 972 / ATCC 24843) (Fission yeast).